We begin with the raw amino-acid sequence, 305 residues long: Glycine betaine-binding protein YehZ (305 aa).

The signal sequence occupies residues 1–23; sequence MPLLKLWAGSLVMLAAVSLPLQA.

This sequence belongs to the OsmX family. As to quaternary structure, the complex is composed of two ATP-binding proteins (YehX), two transmembrane proteins (YehW and YehY) and a solute-binding protein (YehZ).

Its subcellular location is the periplasm. Its function is as follows. Part of an ABC transporter complex involved in low-affinity glycine betaine uptake. Binds glycine betaine with low affinity. The polypeptide is Glycine betaine-binding protein YehZ (yehZ) (Escherichia coli (strain K12)).